The following is a 255-amino-acid chain: Snake venom serine protease HS112 (255 aa).

Positions 1–18 (MVLIRVIANLLILQLSYA) are cleaved as a signal peptide. Positions 19 to 24 (QKSSEL) are excised as a propeptide. The 222-residue stretch at 25 to 246 (VIGGDECDIN…YLPWIQSIIA (222 aa)) folds into the Peptidase S1 domain. Cystine bridges form between Cys-31–Cys-162, Cys-49–Cys-65, Cys-97–Cys-253, Cys-141–Cys-207, Cys-173–Cys-186, and Cys-197–Cys-222. Catalysis depends on charge relay system residues His-64 and Asp-109. An N-linked (GlcNAc...) asparagine glycan is attached at Asn-169. The active-site Charge relay system is Ser-201. Asn-248 carries N-linked (GlcNAc...) asparagine glycosylation.

It belongs to the peptidase S1 family. Snake venom subfamily. Monomer. In terms of tissue distribution, expressed by the venom gland.

It is found in the secreted. Functionally, snake venom serine protease that may act in the hemostasis system of the prey. The protein is Snake venom serine protease HS112 of Bothrops jararaca (Jararaca).